The chain runs to 153 residues: Ribonuclease H (153 aa).

In terms of domain architecture, RNase H type-1 spans 4–145 (SVDSVELFTD…ADQLANRGVD (142 aa)). The Mg(2+) site is built by aspartate 13, glutamate 51, aspartate 73, and aspartate 137.

The protein belongs to the RNase H family. In terms of assembly, monomer. Requires Mg(2+) as cofactor.

It localises to the cytoplasm. It catalyses the reaction Endonucleolytic cleavage to 5'-phosphomonoester.. In terms of biological role, endonuclease that specifically degrades the RNA of RNA-DNA hybrids. This is Ribonuclease H from Pseudomonas fluorescens (strain Pf0-1).